The following is a 1007-amino-acid chain: Serine/threonine-protein kinase PRP4 homolog (1007 aa).

Positions 1–10 (MAAAETQSLR) are enriched in polar residues. The interval 1 to 99 (MAAAETQSLR…EGMSPAKRTK (99 aa)) is disordered. Position 2 is an N-acetylalanine (alanine 2). Phosphoserine is present on residues serine 8, serine 20, serine 23, and serine 32. Basic residues-rich tracts occupy residues 39-59 (KHSR…KHKH) and 67-81 (KKHK…HKRK). The segment covering 82 to 91 (EVIDASDKEG) has biased composition (basic and acidic residues). Phosphoserine occurs at positions 87 and 93. Residue lysine 99 is modified to N6-acetyllysine; alternate. A Glycyl lysine isopeptide (Lys-Gly) (interchain with G-Cter in SUMO2); alternate cross-link involves residue lysine 99. A Glycyl lysine isopeptide (Lys-Gly) (interchain with G-Cter in SUMO2) cross-link involves residue lysine 111. Lysine 117 participates in a covalent cross-link: Glycyl lysine isopeptide (Lys-Gly) (interchain with G-Cter in SUMO2); alternate. Residue lysine 117 forms a Glycyl lysine isopeptide (Lys-Gly) (interchain with G-Cter in SUMO1); alternate linkage. Residue serine 131 is modified to Phosphoserine. A Phosphotyrosine modification is found at tyrosine 140. Disordered regions lie at residues 140–533 (YESG…EEED) and 559–583 (SNMS…SPDD). Serine 142, serine 144, and serine 166 each carry phosphoserine. Residues 157–168 (GNRSSTRSSSTK) show a composition bias toward low complexity. Glycyl lysine isopeptide (Lys-Gly) (interchain with G-Cter in SUMO2) cross-links involve residues lysine 170 and lysine 177. 2 stretches are compositionally biased toward basic residues: residues 179-202 (TTKK…KKSK) and 214-230 (RSKS…SKRS). Serine 239, serine 241, serine 257, serine 277, serine 283, serine 292, and serine 294 each carry phosphoserine. Basic and acidic residues predominate over residues 247–270 (RSQEKIGKARSPTDDKVKIEDKSK). Residues 302 to 315 (SKDRRSRSKERKSK) show a composition bias toward basic residues. Residues 316-325 (RSETDKEKKP) show a composition bias toward basic and acidic residues. A phosphoserine mark is found at serine 328, serine 354, serine 356, serine 366, and serine 368. A compositionally biased stretch (basic residues) spans 342 to 367 (PSRRPGRSPKRRSLSPKPRDKSRRSR). A Phosphothreonine modification is found at threonine 385. Serine 387 is modified (phosphoserine). 2 stretches are compositionally biased toward basic and acidic residues: residues 395 to 408 (RSLE…ERRR) and 415 to 429 (RPRD…RSKD). Residues serine 427, serine 431, and serine 437 each carry the phosphoserine modification. Basic residues predominate over residues 438–497 (PTRRRSRSPIRRRSRSPLRRSRSPRRRSRSPRRRDRGRRSRSRLRRRSRSRGGRRRRSRS). Phosphoserine occurs at positions 518, 519, 520, 565, 569, 578, and 580. The segment covering 518–533 (SSSDDNLEDFDVEEED) has biased composition (acidic residues). The segment covering 562-581 (SVPSEPSSPQSSTRTRSPSP) has biased composition (low complexity). Residues lysine 593 and lysine 659 each participate in a glycyl lysine isopeptide (Lys-Gly) (interchain with G-Cter in SUMO2) cross-link. The Protein kinase domain maps to 687-1003 (YNVYGYTGQG…INQALQHAFI (317 aa)). Residues 693–701 (TGQGVFSNV) and lysine 717 contribute to the ATP site. Lysine 717 is modified (N6-acetyllysine). Catalysis depends on aspartate 815, which acts as the Proton acceptor. Position 849 is a phosphotyrosine (tyrosine 849). At serine 852 the chain carries Phosphoserine.

It belongs to the protein kinase superfamily. CMGC Ser/Thr protein kinase family. In terms of assembly, interacts with CLK1 C-terminus. Associates with the U5 snRNP and NCOR1 deacetylase complexes. Identified in the spliceosome C complex. Phosphorylated by CLK1. Autophosphorylated; phosphorylation inhibits interaction with its targets, such as PRPF6 or SMARCA4.

The protein localises to the nucleus. The protein resides in the chromosome. It is found in the centromere. Its subcellular location is the kinetochore. It catalyses the reaction L-seryl-[protein] + ATP = O-phospho-L-seryl-[protein] + ADP + H(+). It carries out the reaction L-threonyl-[protein] + ATP = O-phospho-L-threonyl-[protein] + ADP + H(+). Functionally, serine/threonine kinase involved in spliceosomal assembly as well as mitosis and signaling regulation. Connects chromatin mediated regulation of transcription and pre-mRNA splicing. During spliceosomal assembly, interacts with and phosphorylates PRPF6 and PRPF31, components of the U4/U6-U5 tri-small nuclear ribonucleoprotein (snRNP), to facilitate the formation of the spliceosome B complex. Plays a role in regulating transcription and the spindle assembly checkpoint (SAC). Associates with U5 snRNP and NCOR1 deacetylase complexes which may allow a coordination of pre-mRNA splicing with chromatin remodeling events involved in transcriptional regulation. Associates and probably phosphorylates SMARCA4 and NCOR1. Phosphorylates SRSF1. Associates with kinetochores during mitosis and is necessary for recruitment and maintenance of the checkpoint proteins such as MAD1L1 and MAD12L1 at the kinetochores. Phosphorylates and regulates the activity of the transcription factors such as ELK1 and KLF13. Phosphorylates nuclear YAP1 and WWTR1/TAZ which induces nuclear exclusion and regulates Hippo signaling pathway, involved in tissue growth control. The polypeptide is Serine/threonine-protein kinase PRP4 homolog (PRP4K) (Pongo abelii (Sumatran orangutan)).